Consider the following 601-residue polypeptide: Elongation factor 4 (601 aa).

One can recognise a tr-type G domain in the interval 6-188 (SHIRNFSIIA…QIVHRVPPPE (183 aa)). Residues 18 to 23 (DHGKST) and 135 to 138 (NKID) each bind GTP.

This sequence belongs to the TRAFAC class translation factor GTPase superfamily. Classic translation factor GTPase family. LepA subfamily.

Its subcellular location is the cell inner membrane. It catalyses the reaction GTP + H2O = GDP + phosphate + H(+). Its function is as follows. Required for accurate and efficient protein synthesis under certain stress conditions. May act as a fidelity factor of the translation reaction, by catalyzing a one-codon backward translocation of tRNAs on improperly translocated ribosomes. Back-translocation proceeds from a post-translocation (POST) complex to a pre-translocation (PRE) complex, thus giving elongation factor G a second chance to translocate the tRNAs correctly. Binds to ribosomes in a GTP-dependent manner. The chain is Elongation factor 4 from Anaeromyxobacter dehalogenans (strain 2CP-C).